The primary structure comprises 312 residues: Ribosomal protein L11 methyltransferase (312 aa).

Positions 163, 184, 206, and 248 each coordinate S-adenosyl-L-methionine.

This sequence belongs to the methyltransferase superfamily. PrmA family.

Its subcellular location is the cytoplasm. It carries out the reaction L-lysyl-[protein] + 3 S-adenosyl-L-methionine = N(6),N(6),N(6)-trimethyl-L-lysyl-[protein] + 3 S-adenosyl-L-homocysteine + 3 H(+). In terms of biological role, methylates ribosomal protein L11. This Clostridium botulinum (strain Loch Maree / Type A3) protein is Ribosomal protein L11 methyltransferase.